The following is a 1358-amino-acid chain: DNA-directed RNA polymerase subunit beta (1358 aa).

This sequence belongs to the RNA polymerase beta chain family. As to quaternary structure, the RNAP catalytic core consists of 2 alpha, 1 beta, 1 beta' and 1 omega subunit. When a sigma factor is associated with the core the holoenzyme is formed, which can initiate transcription.

The catalysed reaction is RNA(n) + a ribonucleoside 5'-triphosphate = RNA(n+1) + diphosphate. In terms of biological role, DNA-dependent RNA polymerase catalyzes the transcription of DNA into RNA using the four ribonucleoside triphosphates as substrates. This Thioalkalivibrio sulfidiphilus (strain HL-EbGR7) protein is DNA-directed RNA polymerase subunit beta.